A 255-amino-acid polypeptide reads, in one-letter code: Phycoerythrobilin:ferredoxin oxidoreductase (255 aa).

The protein belongs to the HY2 family.

It carries out the reaction (3Z)-phycoerythrobilin + oxidized 2[4Fe-4S]-[ferredoxin] = 15,16-dihydrobiliverdin + reduced 2[4Fe-4S]-[ferredoxin] + 2 H(+). Functionally, catalyzes the two-electron reduction of the C2 and C3(1) diene system of 15,16-dihydrobiliverdin. In Nostoc punctiforme (strain ATCC 29133 / PCC 73102), this protein is Phycoerythrobilin:ferredoxin oxidoreductase (pebB).